The primary structure comprises 447 residues: Tyrosine aminotransferase (447 aa).

Residue lysine 273 is modified to N6-(pyridoxal phosphate)lysine. Serine 441 bears the Phosphoserine mark.

The protein belongs to the class-I pyridoxal-phosphate-dependent aminotransferase family. In terms of assembly, homodimer. Pyridoxal 5'-phosphate is required as a cofactor.

It catalyses the reaction L-tyrosine + 2-oxoglutarate = 3-(4-hydroxyphenyl)pyruvate + L-glutamate. It functions in the pathway amino-acid degradation; L-phenylalanine degradation; acetoacetate and fumarate from L-phenylalanine: step 2/6. Functionally, transaminase involved in tyrosine breakdown. Converts tyrosine to p-hydroxyphenylpyruvate. Can catalyze the reverse reaction, using glutamic acid, with 2-oxoglutarate as cosubstrate (in vitro). Has much lower affinity and transaminase activity for phenylalanine. The protein is Tyrosine aminotransferase (TAT) of Bos taurus (Bovine).